Reading from the N-terminus, the 186-residue chain is Peptidyl-tRNA hydrolase (186 aa).

Residue Tyr14 coordinates tRNA. The Proton acceptor role is filled by His19. The tRNA site is built by Phe64, Asn66, and Asn112.

It belongs to the PTH family. As to quaternary structure, monomer.

It is found in the cytoplasm. The enzyme catalyses an N-acyl-L-alpha-aminoacyl-tRNA + H2O = an N-acyl-L-amino acid + a tRNA + H(+). Functionally, hydrolyzes ribosome-free peptidyl-tRNAs (with 1 or more amino acids incorporated), which drop off the ribosome during protein synthesis, or as a result of ribosome stalling. Catalyzes the release of premature peptidyl moieties from peptidyl-tRNA molecules trapped in stalled 50S ribosomal subunits, and thus maintains levels of free tRNAs and 50S ribosomes. The polypeptide is Peptidyl-tRNA hydrolase (Mycoplasma mycoides subsp. mycoides SC (strain CCUG 32753 / NCTC 10114 / PG1)).